Here is a 241-residue protein sequence, read N- to C-terminus: Uridylate kinase (241 aa).

Residue 15–18 (KISG) participates in ATP binding. Positions 23–28 (GDQGFG) are involved in allosteric activation by GTP. Gly-57 lines the UMP pocket. Residues Gly-58 and Arg-62 each contribute to the ATP site. UMP-binding positions include Asp-77 and 138-145 (TGNPYFTT). 3 residues coordinate ATP: Thr-165, Tyr-171, and Asp-174.

It belongs to the UMP kinase family. Homohexamer.

The protein localises to the cytoplasm. It catalyses the reaction UMP + ATP = UDP + ADP. It functions in the pathway pyrimidine metabolism; CTP biosynthesis via de novo pathway; UDP from UMP (UMPK route): step 1/1. Allosterically activated by GTP. Inhibited by UTP. In terms of biological role, catalyzes the reversible phosphorylation of UMP to UDP. The polypeptide is Uridylate kinase (Paracoccus zeaxanthinifaciens).